Consider the following 124-residue polypeptide: Flowering-promoting factor 1-like protein 1 (124 aa).

The disordered stretch occupies residues 19–42 (PYNQSAGDSSESSSSGGNQQQRMR). The span at 22–39 (QSAGDSSESSSSGGNQQQ) shows a compositional bias: low complexity.

The protein belongs to the FPF1 family. In terms of tissue distribution, expressed in roots, flowers, and at a low level, in leaves.

Functionally, modulates the competence to flowering of apical meristems. The polypeptide is Flowering-promoting factor 1-like protein 1 (FLP1) (Arabidopsis thaliana (Mouse-ear cress)).